Reading from the N-terminus, the 306-residue chain is UDP-3-O-acyl-N-acetylglucosamine deacetylase (306 aa).

Residues histidine 79, histidine 238, and aspartate 242 each contribute to the Zn(2+) site. Residue histidine 265 is the Proton donor of the active site.

This sequence belongs to the LpxC family. It depends on Zn(2+) as a cofactor.

The enzyme catalyses a UDP-3-O-[(3R)-3-hydroxyacyl]-N-acetyl-alpha-D-glucosamine + H2O = a UDP-3-O-[(3R)-3-hydroxyacyl]-alpha-D-glucosamine + acetate. It participates in glycolipid biosynthesis; lipid IV(A) biosynthesis; lipid IV(A) from (3R)-3-hydroxytetradecanoyl-[acyl-carrier-protein] and UDP-N-acetyl-alpha-D-glucosamine: step 2/6. Catalyzes the hydrolysis of UDP-3-O-myristoyl-N-acetylglucosamine to form UDP-3-O-myristoylglucosamine and acetate, the committed step in lipid A biosynthesis. This chain is UDP-3-O-acyl-N-acetylglucosamine deacetylase, found in Shewanella loihica (strain ATCC BAA-1088 / PV-4).